The primary structure comprises 75 residues: MKNKPDDRRDNVDKIQYNITKTIQNCELADEMIAKTDDEKTKKTLIEKNQRRREALDGMREEIKDEARDKKNGYM.

Residues 48–75 form a disordered region; it reads KNQRRREALDGMREEIKDEARDKKNGYM.

It belongs to the Tlp family.

This chain is Protein Tlp homolog, found in Clostridium botulinum (strain 657 / Type Ba4).